Reading from the N-terminus, the 279-residue chain is Elongation factor Ts (279 aa).

The interval 80–83 is involved in Mg(2+) ion dislocation from EF-Tu; the sequence is TDFV.

It belongs to the EF-Ts family.

The protein resides in the cytoplasm. Functionally, associates with the EF-Tu.GDP complex and induces the exchange of GDP to GTP. It remains bound to the aminoacyl-tRNA.EF-Tu.GTP complex up to the GTP hydrolysis stage on the ribosome. This chain is Elongation factor Ts, found in Borreliella afzelii (strain PKo) (Borrelia afzelii).